Here is a 177-residue protein sequence, read N- to C-terminus: RNA pyrophosphohydrolase (177 aa).

The Nudix hydrolase domain maps to Gly-6 to Lys-149. Residues Gly-38–Gly-59 carry the Nudix box motif.

Belongs to the Nudix hydrolase family. RppH subfamily. A divalent metal cation is required as a cofactor.

Accelerates the degradation of transcripts by removing pyrophosphate from the 5'-end of triphosphorylated RNA, leading to a more labile monophosphorylated state that can stimulate subsequent ribonuclease cleavage. The protein is RNA pyrophosphohydrolase of Edwardsiella ictaluri (strain 93-146).